A 302-amino-acid chain; its full sequence is AT-hook motif nuclear-localized protein 29 (302 aa).

Residues 1–95 (MDGGYDQSGG…KPPVIVTRDS (95 aa)) form a disordered region. Residues 32 to 44 (QLHPLPQPQPQPQ) are compositionally biased toward pro residues. Positions 72–84 (KRPRGRPPGSKNK) form a DNA-binding region, a.T hook. In terms of domain architecture, PPC spans 96-241 (PNVLRSHVLE…DEGGEGGEGG (146 aa)). Positions 164-169 (GRFEIL) are required for the binding to non-AHL interactors. A disordered region spans residues 229-279 (PLEDEGGEGGEGGEVGEGGGGEGGPPPATSSSPPSGAGQGQLRGNMSGYDQ). Residues 237 to 251 (GGEGGEVGEGGGGEG) are compositionally biased toward gly residues.

As to quaternary structure, homodimer. Interacts with AHL5, AHL12, AHL25, AHL27, TCP4, TCP13 and EF114. In terms of tissue distribution, expressed in the hypocotyl and the vascular tissue of seedling.

The protein localises to the nucleus. In terms of biological role, transcription factor that specifically binds AT-rich DNA sequences related to the nuclear matrix attachment regions (MARs). Acts redundantly with AHL18, AHL22 and AHL27 in the regulation of flowering and regulation of the hypocotyl elongation. Acts redundantly with AHL27/ESC to modulate hypocotyl growth inhibition in response to light. This chain is AT-hook motif nuclear-localized protein 29, found in Arabidopsis thaliana (Mouse-ear cress).